An 862-amino-acid polypeptide reads, in one-letter code: DNA mismatch repair protein MutS (862 aa).

608-615 (GPNMAGKS) contributes to the ATP binding site.

The protein belongs to the DNA mismatch repair MutS family.

This protein is involved in the repair of mismatches in DNA. It is possible that it carries out the mismatch recognition step. This protein has a weak ATPase activity. This is DNA mismatch repair protein MutS from Bacteroides thetaiotaomicron (strain ATCC 29148 / DSM 2079 / JCM 5827 / CCUG 10774 / NCTC 10582 / VPI-5482 / E50).